We begin with the raw amino-acid sequence, 135 residues long: Large ribosomal subunit protein bL19 (135 aa).

The protein belongs to the bacterial ribosomal protein bL19 family.

Functionally, this protein is located at the 30S-50S ribosomal subunit interface and may play a role in the structure and function of the aminoacyl-tRNA binding site. This is Large ribosomal subunit protein bL19 from Xanthomonas oryzae pv. oryzae (strain KACC10331 / KXO85).